The sequence spans 319 residues: ATP-dependent 6-phosphofructokinase (319 aa).

G11 provides a ligand contact to ATP. 21–25 (RAVVR) contributes to the ADP binding site. ATP-binding positions include 72-73 (RC) and 102-105 (GDGS). D103 lines the Mg(2+) pocket. 125-127 (TID) lines the substrate pocket. D127 serves as the catalytic Proton acceptor. R154 contacts ADP. Residues R162 and 169–171 (MGR) each bind substrate. ADP-binding positions include 185–187 (GAE), R211, and 213–215 (KKH). Substrate is bound by residues E222, R243, and 249–252 (HVQR).

Belongs to the phosphofructokinase type A (PFKA) family. ATP-dependent PFK group I subfamily. Prokaryotic clade 'B1' sub-subfamily. As to quaternary structure, homotetramer. Mg(2+) is required as a cofactor.

It localises to the cytoplasm. It carries out the reaction beta-D-fructose 6-phosphate + ATP = beta-D-fructose 1,6-bisphosphate + ADP + H(+). Its pathway is carbohydrate degradation; glycolysis; D-glyceraldehyde 3-phosphate and glycerone phosphate from D-glucose: step 3/4. Allosterically activated by ADP and other diphosphonucleosides, and allosterically inhibited by phosphoenolpyruvate. In terms of biological role, catalyzes the phosphorylation of D-fructose 6-phosphate to fructose 1,6-bisphosphate by ATP, the first committing step of glycolysis. The polypeptide is ATP-dependent 6-phosphofructokinase (Bacillus cereus (strain ATCC 14579 / DSM 31 / CCUG 7414 / JCM 2152 / NBRC 15305 / NCIMB 9373 / NCTC 2599 / NRRL B-3711)).